An 89-amino-acid polypeptide reads, in one-letter code: ATP synthase subunit e, mitochondrial (89 aa).

The residue at position 1 (Ser-1) is an N-acetylserine. The helical transmembrane segment at 8–25 (YSSLAAGIVYGAYHTYTL) threads the bilayer.

In terms of assembly, F-type ATP synthases have 2 components, the catalytic core F(1) and the membrane-embedded component F(0), linked together by a central stalk and a peripheral stalk. The central stalk, also called rotor shaft, is often seen as part of F(1). The peripheral stalk is seen as part of F(0). F(0) contains the membrane channel next to the rotor. F-type ATP synthases form dimers but each monomer functions independently in ATP generation. The dimer consists of 18 different polypeptides: ATP1 (subunit alpha, part of F(1), 3 molecules per monomer), ATP2 (subunit beta, part of F(1), 3 molecules per monomer), ATP3 (subunit gamma, part of the central stalk), ATP4 (subunit b, part of the peripheral stalk), ATP5/OSCP (subunit 5/OSCP, part of the peripheral stalk), ATP6 (subunit a, part of the peripheral stalk), ATP7 (subunit d, part of the peripheral stalk), ATP8 (subunit 8, part of the peripheral stalk), OLI1 (subunit c, part of the rotor, 10 molecules per monomer), ATP14 (subunit h, part of the peripheral stalk), ATP15 (subunit epsilon, part of the central stalk), ATP16 (subunit delta, part of the central stalk), ATP17 (subunit f, part of the peripheral stalk), ATP18 (subunit i/j, part of the peripheral stalk). Dimer-specific subunits are ATP19 (subunit k, at interface between monomers), ATP20 (subunit g, at interface between monomers), TIM11 (subunit e, at interface between monomers). Also contains subunit L.

It localises to the mitochondrion inner membrane. Functionally, mitochondrial membrane ATP synthase (F(1)F(0) ATP synthase or Complex V) produces ATP from ADP in the presence of a proton gradient across the membrane which is generated by electron transport complexes of the respiratory chain. F-type ATP synthases consist of two structural domains, F(1) - containing the extramembraneous catalytic core, and F(0) - containing the membrane proton channel, linked together by a central stalk and a peripheral stalk. During catalysis, ATP synthesis in the catalytic domain of F(1) is coupled via a rotary mechanism of the central stalk subunits to proton translocation. Part of the complex F(0) domain. Minor subunit located with subunit a/ATP6 in the membrane. Together with subunit g/ATP20, probably contributes to membrane curvature at the site of the ATP synthase dimer, ultimately contributing to formation of cristae. The polypeptide is ATP synthase subunit e, mitochondrial (Pichia angusta (Yeast)).